The chain runs to 376 residues: Formate dehydrogenase 2 (376 aa).

Substrate is bound by residues valine 97 and asparagine 121. NAD(+) is bound by residues 176 to 177 (RI), aspartate 197, 244 to 248 (PLHKD), threonine 270, aspartate 296, and 325 to 328 (HISG).

It belongs to the D-isomer specific 2-hydroxyacid dehydrogenase family. FDH subfamily. Homodimer.

It localises to the cytoplasm. The catalysed reaction is formate + NAD(+) = CO2 + NADH. Its function is as follows. Catalyzes the NAD(+)-dependent oxidation of formate to carbon dioxide. Formate oxidation is the final step in the methanol oxidation pathway in methylotrophic microorganisms. Has a role in the detoxification of exogenous formate in non-methylotrophic organisms. The protein is Formate dehydrogenase 2 (FDH2) of Saccharomyces cerevisiae (strain CEN.PK113-7D) (Baker's yeast).